Consider the following 430-residue polypeptide: Serine hydroxymethyltransferase (430 aa).

Residue 120–122 (GHI) participates in (6S)-5,6,7,8-tetrahydrofolate binding. Residue K226 is modified to N6-(pyridoxal phosphate)lysine.

This sequence belongs to the SHMT family. As to quaternary structure, homodimer. Requires pyridoxal 5'-phosphate as cofactor.

It localises to the cytoplasm. The protein operates within amino-acid biosynthesis; glycine biosynthesis; glycine from L-serine: step 1/1. In terms of biological role, catalyzes the reversible interconversion of serine and glycine with a modified folate serving as the one-carbon carrier. Also exhibits a pteridine-independent aldolase activity toward beta-hydroxyamino acids, producing glycine and aldehydes, via a retro-aldol mechanism. The protein is Serine hydroxymethyltransferase of Pyrobaculum aerophilum (strain ATCC 51768 / DSM 7523 / JCM 9630 / CIP 104966 / NBRC 100827 / IM2).